The chain runs to 296 residues: Nucleotide-binding protein MGAS2096_Spy0550 (296 aa).

ATP is bound at residue 13-20 (GMSGAGKT). A GTP-binding site is contributed by 63-66 (DMRS).

The protein belongs to the RapZ-like family.

Its function is as follows. Displays ATPase and GTPase activities. The chain is Nucleotide-binding protein MGAS2096_Spy0550 from Streptococcus pyogenes serotype M12 (strain MGAS2096).